Reading from the N-terminus, the 654-residue chain is Fructose-1,6-bisphosphatase class 3 (654 aa).

Residues 288–307 (NPAFKPKKRPDKHERLTQRE) are disordered. Over residues 298 to 307 (DKHERLTQRE) the composition is skewed to basic and acidic residues.

The protein belongs to the FBPase class 3 family. The cofactor is Mn(2+).

It catalyses the reaction beta-D-fructose 1,6-bisphosphate + H2O = beta-D-fructose 6-phosphate + phosphate. It participates in carbohydrate biosynthesis; gluconeogenesis. The protein is Fructose-1,6-bisphosphatase class 3 of Staphylococcus aureus (strain bovine RF122 / ET3-1).